Reading from the N-terminus, the 304-residue chain is Cytochrome c biogenesis protein CcsA (304 aa).

A run of 8 helical transmembrane segments spans residues 11 to 31 (SLGF…FWAV), 37 to 57 (AGLV…QLIL), 63 to 83 (GHFP…ACTL), 96 to 116 (IVAA…SFAL), 141 to 161 (VIMV…AVLV), 212 to 232 (TITV…VWAN), 246 to 263 (TWAL…HTRL), and 275 to 295 (VAVV…LLGI).

It belongs to the CcmF/CycK/Ccl1/NrfE/CcsA family. In terms of assembly, may interact with ccs1.

The protein localises to the cellular thylakoid membrane. Required during biogenesis of c-type cytochromes (cytochrome c6 and cytochrome f) at the step of heme attachment. This is Cytochrome c biogenesis protein CcsA from Synechococcus sp. (strain CC9605).